Consider the following 179-residue polypeptide: Large ribosomal subunit protein uL5 (179 aa).

Belongs to the universal ribosomal protein uL5 family. As to quaternary structure, part of the 50S ribosomal subunit; part of the 5S rRNA/L5/L18/L25 subcomplex. Contacts the 5S rRNA and the P site tRNA. Forms a bridge to the 30S subunit in the 70S ribosome.

In terms of biological role, this is one of the proteins that bind and probably mediate the attachment of the 5S RNA into the large ribosomal subunit, where it forms part of the central protuberance. In the 70S ribosome it contacts protein S13 of the 30S subunit (bridge B1b), connecting the 2 subunits; this bridge is implicated in subunit movement. Contacts the P site tRNA; the 5S rRNA and some of its associated proteins might help stabilize positioning of ribosome-bound tRNAs. In Caldanaerobacter subterraneus subsp. tengcongensis (strain DSM 15242 / JCM 11007 / NBRC 100824 / MB4) (Thermoanaerobacter tengcongensis), this protein is Large ribosomal subunit protein uL5.